The chain runs to 240 residues: Uridylate kinase (240 aa).

Lysine 12 to glycine 15 is an ATP binding site. Residues glycine 20–glycine 25 are involved in allosteric activation by GTP. Position 54 (glycine 54) interacts with UMP. Glycine 55 and arginine 59 together coordinate ATP. UMP contacts are provided by residues aspartate 74 and threonine 135–threonine 142. 3 residues coordinate ATP: asparagine 163, tyrosine 169, and aspartate 172.

This sequence belongs to the UMP kinase family. Homohexamer.

Its subcellular location is the cytoplasm. The enzyme catalyses UMP + ATP = UDP + ADP. Its pathway is pyrimidine metabolism; CTP biosynthesis via de novo pathway; UDP from UMP (UMPK route): step 1/1. With respect to regulation, allosterically activated by GTP. Inhibited by UTP. Its function is as follows. Catalyzes the reversible phosphorylation of UMP to UDP. In Bacillus anthracis, this protein is Uridylate kinase.